The sequence spans 896 residues: Translation initiation factor IF-2 (896 aa).

2 disordered regions span residues 53-81 (HGGE…SASK) and 117-301 (AEEA…ESMD). Polar residues predominate over residues 60–79 (TKMTLQRKSVSTLSVGSGSA). Residues 117–227 (AEEAASKAKA…ESEKTGDHHV (111 aa)) are compositionally biased toward basic and acidic residues. Over residues 254 to 266 (ATPAPAAAPANTG) the composition is skewed to low complexity. The segment covering 273 to 282 (GKDNRRDSRN) has biased composition (basic and acidic residues). Residues 283 to 294 (ARGGRNARNNRS) are compositionally biased toward low complexity. In terms of domain architecture, tr-type G spans 394-563 (SRAPVVTIMG…LLEAEVLELK (170 aa)). Positions 403–410 (GHVDHGKT) are G1. 403–410 (GHVDHGKT) serves as a coordination point for GTP. The G2 stretch occupies residues 428–432 (GITQH). A G3 region spans residues 449–452 (DTPG). GTP-binding positions include 449-453 (DTPGH) and 503-506 (NKID). Residues 503–506 (NKID) are G4. The interval 539–541 (SAK) is G5.

It belongs to the TRAFAC class translation factor GTPase superfamily. Classic translation factor GTPase family. IF-2 subfamily.

The protein resides in the cytoplasm. One of the essential components for the initiation of protein synthesis. Protects formylmethionyl-tRNA from spontaneous hydrolysis and promotes its binding to the 30S ribosomal subunits. Also involved in the hydrolysis of GTP during the formation of the 70S ribosomal complex. The protein is Translation initiation factor IF-2 of Shewanella sediminis (strain HAW-EB3).